Here is a 138-residue protein sequence, read N- to C-terminus: uncharacterized protein (138 aa).

A disordered region spans residues 1–73 (MCSAGQLLGG…NHTGEPVGDD (73 aa)). The span at 7-18 (LLGGGGGGGGSG) shows a compositional bias: gly residues. Residues 19–29 (GERDEDRDALA) show a composition bias toward basic and acidic residues. Residues 30–43 (ERAAAGTEQESGAS) show a composition bias toward low complexity. A helical transmembrane segment spans residues 106–126 (VIVIFFWVMLWFLGLPAFGLV).

The protein belongs to the FAM241 family.

The protein localises to the membrane. This is an uncharacterized protein from Bos taurus (Bovine).